The sequence spans 545 residues: Probable intron-encoded endonuclease 4 (545 aa).

7 helical membrane-spanning segments follow: residues 1 to 21 (MYLS…FFGR), 30 to 50 (LITC…FFEV), 81 to 101 (LTVA…IYSI), 119 to 139 (LFTF…MFVG), 140 to 160 (WEGV…RIAA), 177 to 197 (FLTI…YATV), and 200 to 220 (LAPY…LIGA). The segment at 1–239 (MYLSIIILPL…HVWLPMAMEG (239 aa)) is ndh-5 exons 1 and 2 encoded. The tract at residues 240–545 (FFSRAFLKLH…NNINKSDYNK (306 aa)) is ndh-5 intron 2 encoded.

This sequence in the N-terminal section; belongs to the complex I subunit 5 family. In the C-terminal section; belongs to the LAGLIDADG endonuclease family.

It localises to the mitochondrion membrane. Mitochondrial DNA endonuclease involved in intron homing. The protein is Probable intron-encoded endonuclease 4 of Neurospora crassa (strain ATCC 24698 / 74-OR23-1A / CBS 708.71 / DSM 1257 / FGSC 987).